A 194-amino-acid polypeptide reads, in one-letter code: Protein GrpE (194 aa).

The span at 1 to 14 (MENTQENPTSQNPT) shows a compositional bias: polar residues. The tract at residues 1–50 (MENTQENPTSQNPTPADETARQAAEAAAPQQEAAANAATDSPVNAEQSAL) is disordered. The span at 21–38 (RQAAEAAAPQQEAAANAA) shows a compositional bias: low complexity.

This sequence belongs to the GrpE family. As to quaternary structure, homodimer.

Its subcellular location is the cytoplasm. Functionally, participates actively in the response to hyperosmotic and heat shock by preventing the aggregation of stress-denatured proteins, in association with DnaK and GrpE. It is the nucleotide exchange factor for DnaK and may function as a thermosensor. Unfolded proteins bind initially to DnaJ; upon interaction with the DnaJ-bound protein, DnaK hydrolyzes its bound ATP, resulting in the formation of a stable complex. GrpE releases ADP from DnaK; ATP binding to DnaK triggers the release of the substrate protein, thus completing the reaction cycle. Several rounds of ATP-dependent interactions between DnaJ, DnaK and GrpE are required for fully efficient folding. The polypeptide is Protein GrpE (Paraburkholderia phytofirmans (strain DSM 17436 / LMG 22146 / PsJN) (Burkholderia phytofirmans)).